The sequence spans 314 residues: DNA-directed RNA polymerase subunit alpha (314 aa).

An alpha N-terminal domain (alpha-NTD) region spans residues Met1–Thr228. The interval Lys245–Asp314 is alpha C-terminal domain (alpha-CTD).

It belongs to the RNA polymerase alpha chain family. In terms of assembly, homodimer. The RNAP catalytic core consists of 2 alpha, 1 beta, 1 beta' and 1 omega subunit. When a sigma factor is associated with the core the holoenzyme is formed, which can initiate transcription.

The enzyme catalyses RNA(n) + a ribonucleoside 5'-triphosphate = RNA(n+1) + diphosphate. Functionally, DNA-dependent RNA polymerase catalyzes the transcription of DNA into RNA using the four ribonucleoside triphosphates as substrates. This Oceanobacillus iheyensis (strain DSM 14371 / CIP 107618 / JCM 11309 / KCTC 3954 / HTE831) protein is DNA-directed RNA polymerase subunit alpha.